The chain runs to 206 residues: Ion-translocating oxidoreductase complex subunit G (206 aa).

A helical transmembrane segment spans residues 9 to 29 (GITLALFAAGSTGLTAAINQM). Residue Thr-174 is modified to FMN phosphoryl threonine.

The protein belongs to the RnfG family. The complex is composed of six subunits: RsxA, RsxB, RsxC, RsxD, RsxE and RsxG. The cofactor is FMN.

The protein localises to the cell inner membrane. Part of a membrane-bound complex that couples electron transfer with translocation of ions across the membrane. Required to maintain the reduced state of SoxR. Probably transfers electron from NAD(P)H to SoxR. The polypeptide is Ion-translocating oxidoreductase complex subunit G (Escherichia coli (strain K12)).